We begin with the raw amino-acid sequence, 282 residues long: BURP domain-containing protein BNM2A (282 aa).

Positions 1-26 (MASLRFSVTFPALLSLLLLSLWVVEA) are cleaved as a signal peptide. One can recognise a BURP domain in the interval 60–282 (FFKISDLKLG…PLDNIVWVSK (223 aa)).

Expressed in the radicle and cotyledon of germinating seeds 2 days post-imbibition (DPI), in stems and roots of 30-DPI young plants and in floral buds, but not in fully open flowers or leaves. Expressed in the embryo and seed coat tissues of developing seeds. The protein accumulates only in seeds and only long after transcript accumulation becomes evident.

The protein resides in the protein storage vacuole. The protein is BURP domain-containing protein BNM2A of Brassica napus (Rape).